Reading from the N-terminus, the 211-residue chain is Thymidine kinase (211 aa).

Residues S9–S16 and D87–Q90 contribute to the ATP site. Catalysis depends on E88, which acts as the Proton acceptor. Positions 145, 147, 182, and 185 each coordinate Zn(2+).

It belongs to the thymidine kinase family. Homotetramer.

It is found in the cytoplasm. It carries out the reaction thymidine + ATP = dTMP + ADP + H(+). The polypeptide is Thymidine kinase (Rhodopirellula baltica (strain DSM 10527 / NCIMB 13988 / SH1)).